Here is a 156-residue protein sequence, read N- to C-terminus: Small ribosomal subunit protein uS7 (156 aa).

It belongs to the universal ribosomal protein uS7 family. Part of the 30S ribosomal subunit. Contacts proteins S9 and S11.

Functionally, one of the primary rRNA binding proteins, it binds directly to 16S rRNA where it nucleates assembly of the head domain of the 30S subunit. Is located at the subunit interface close to the decoding center, probably blocks exit of the E-site tRNA. In Rhodopseudomonas palustris (strain BisB5), this protein is Small ribosomal subunit protein uS7.